The primary structure comprises 388 residues: Formate-dependent phosphoribosylglycinamide formyltransferase (388 aa).

N(1)-(5-phospho-beta-D-ribosyl)glycinamide-binding positions include 11–12 (EL) and Glu71. Residues Arg103, Lys144, 149-154 (SSGKGQ), 184-187 (EEFI), and Glu192 each bind ATP. Residues 108-300 (DLAAKELGLK…EFELHLRAVL (193 aa)) enclose the ATP-grasp domain. Residues Glu257 and Glu270 each contribute to the Mg(2+) site. Residues Asp277, Lys349, and 356 to 357 (RR) each bind N(1)-(5-phospho-beta-D-ribosyl)glycinamide.

It belongs to the PurK/PurT family. Homodimer.

The catalysed reaction is N(1)-(5-phospho-beta-D-ribosyl)glycinamide + formate + ATP = N(2)-formyl-N(1)-(5-phospho-beta-D-ribosyl)glycinamide + ADP + phosphate + H(+). The protein operates within purine metabolism; IMP biosynthesis via de novo pathway; N(2)-formyl-N(1)-(5-phospho-D-ribosyl)glycinamide from N(1)-(5-phospho-D-ribosyl)glycinamide (formate route): step 1/1. Involved in the de novo purine biosynthesis. Catalyzes the transfer of formate to 5-phospho-ribosyl-glycinamide (GAR), producing 5-phospho-ribosyl-N-formylglycinamide (FGAR). Formate is provided by PurU via hydrolysis of 10-formyl-tetrahydrofolate. This Bacteroides fragilis (strain ATCC 25285 / DSM 2151 / CCUG 4856 / JCM 11019 / LMG 10263 / NCTC 9343 / Onslow / VPI 2553 / EN-2) protein is Formate-dependent phosphoribosylglycinamide formyltransferase.